The following is a 70-amino-acid chain: Large ribosomal subunit protein uL29 (70 aa).

This sequence belongs to the universal ribosomal protein uL29 family.

The sequence is that of Large ribosomal subunit protein uL29 from Prochlorococcus marinus (strain MIT 9211).